Here is a 45-residue protein sequence, read N- to C-terminus: Protein PsbN (45 aa).

The helical transmembrane segment at 12 to 30 threads the bilayer; the sequence is FLSRSLVSFTGYALYTAFG.

It belongs to the PsbN family.

The protein resides in the plastid. It localises to the chloroplast thylakoid membrane. Functionally, may play a role in photosystem I and II biogenesis. The sequence is that of Protein PsbN from Adiantum capillus-veneris (Maidenhair fern).